The sequence spans 556 residues: MPKFDVAKSDLERLVGREFSVEEWEDLVLYAKCELDDVWEEDGKIYFKLDSKDTNRPDLWSAEGVARQIRWALGLAKGLPKYEVEESDVVVYVDKKLRNIRPYGVYAVVEGLKLDEEALSQLIQLQEKVALTYGRRRREVAIGIFDFDKVKPPIYYRAAEKTEKFVPLGYSEEMTLEEILEKHEKGREYGHLIRDKPYYPLLVDSEGNVLSMPPIINSELTGRVTTETKNVFVDVTGWDLRKVMLALNVIVTALAERGGKIKRVKVIYPDFEITTPDLTPKEFEVSFEYIRKLSGLELSNEEIKELLERMMYEVEILSENKAKVKYPAFRDDIMHTRDVLEDVLIAYGYNNIDPEEPKLAVQGRGDPFKDFEDAIRDLMVGFGLQEVMTFNLTSKEVQFDKMNIPEEEIVEIANPISSRWSALRKWLLPSLMEFLSNNTHEEYPQRIFEVGLATLIDESRETKTVSEPKLAVALAGSGYTFTNAKEILDSLMRHLGIEYDIEETVHGSFIPGRVGKILVDGKEIGIIGEIHPQVLENWNIQVPVVAFEIFLKPLYR.

The B5 domain maps to 278–354 (LTPKEFEVSF…IAYGYNNIDP (77 aa)). 4 residues coordinate Mg(2+): aspartate 332, aspartate 338, glutamate 341, and aspartate 342.

This sequence belongs to the phenylalanyl-tRNA synthetase beta subunit family. Type 2 subfamily. In terms of assembly, tetramer of two alpha and two beta subunits. It depends on Mg(2+) as a cofactor.

It localises to the cytoplasm. The enzyme catalyses tRNA(Phe) + L-phenylalanine + ATP = L-phenylalanyl-tRNA(Phe) + AMP + diphosphate + H(+). In Pyrococcus furiosus (strain ATCC 43587 / DSM 3638 / JCM 8422 / Vc1), this protein is Phenylalanine--tRNA ligase beta subunit.